Reading from the N-terminus, the 536-residue chain is Global nitrogen regulator NrpR (536 aa).

Residues 7–72 form a winged helix-turn-helix region; it reads VEILSILSEA…EITEKGIEEL (66 aa). NRD regions lie at residues 80–314 and 315–536; these read RIGS…KGKF and KVTP…YDDI.

Belongs to the NrpR family. In terms of assembly, homotetramer. Binds to a single operator as a dimer and cooperatively to two operators as a dimer pair.

Its activity is regulated as follows. Under nitrogen limitation, binding of the intracellular nitrogen metabolite 2-oxoglutarate to NrpR decreases the binding affinity of NrpR to DNA, leading to initiation of transcription. Functionally, transcriptional repressor of nitrogen fixation and assimilation genes. Binds to two tandem operators in the glnA and nif promoters, thereby blocking transcription of the genes. The chain is Global nitrogen regulator NrpR from Methanococcus maripaludis (strain DSM 14266 / JCM 13030 / NBRC 101832 / S2 / LL).